A 578-amino-acid chain; its full sequence is Triokinase/FMN cyclase (578 aa).

The DhaK domain maps to 9 to 336; the sequence is SVEGCAGDAL…IDAETNAKAW (328 aa). Dihydroxyacetone-binding positions include 56-59, K109, and D114; that span reads GSGH. Catalysis depends on H221, which acts as the Tele-hemiaminal-histidine intermediate. A DhaL domain is found at 372–571; sequence KQMTLVLDRI…AAAIFRAILE (200 aa). Residues 401–404, 446–447, G486, and 494–495 each bind ATP; these read DGDC, SS, and TM. A phosphoserine mark is found at S511 and S545. 556 to 558 contacts ATP; it reads DPG.

This sequence belongs to the dihydroxyacetone kinase (DAK) family. In terms of assembly, homodimer. Interacts with IFIH1 (via the CARD domains), the interaction is inhibited by viral infection. The cofactor is Mg(2+). Mn(2+) is required as a cofactor. Requires Co(2+) as cofactor.

The enzyme catalyses dihydroxyacetone + ATP = dihydroxyacetone phosphate + ADP + H(+). It catalyses the reaction D-glyceraldehyde + ATP = D-glyceraldehyde 3-phosphate + ADP + H(+). It carries out the reaction FAD = riboflavin cyclic-4',5'-phosphate + AMP + H(+). With respect to regulation, each activity is inhibited by the substrate(s) of the other. Catalyzes both the phosphorylation of dihydroxyacetone and of glyceraldehyde, and the splitting of ribonucleoside diphosphate-X compounds among which FAD is the best substrate. Represses IFIH1-mediated cellular antiviral response. The protein is Triokinase/FMN cyclase (Tkfc) of Rattus norvegicus (Rat).